A 140-amino-acid chain; its full sequence is Nucleoside diphosphate kinase (140 aa).

Residues K11, F59, R87, T93, R104, and N114 each coordinate ATP. H117 functions as the Pros-phosphohistidine intermediate in the catalytic mechanism.

The protein belongs to the NDK family. Mg(2+) is required as a cofactor.

The protein localises to the cytoplasm. The catalysed reaction is a 2'-deoxyribonucleoside 5'-diphosphate + ATP = a 2'-deoxyribonucleoside 5'-triphosphate + ADP. The enzyme catalyses a ribonucleoside 5'-diphosphate + ATP = a ribonucleoside 5'-triphosphate + ADP. Its function is as follows. Major role in the synthesis of nucleoside triphosphates other than ATP. The ATP gamma phosphate is transferred to the NDP beta phosphate via a ping-pong mechanism, using a phosphorylated active-site intermediate. This is Nucleoside diphosphate kinase from Metallosphaera sedula (strain ATCC 51363 / DSM 5348 / JCM 9185 / NBRC 15509 / TH2).